Reading from the N-terminus, the 411-residue chain is Acetate kinase (411 aa).

Asn7 contacts Mg(2+). An ATP-binding site is contributed by Lys14. Arg94 serves as a coordination point for substrate. Catalysis depends on Asp151, which acts as the Proton donor/acceptor. Residues 211–215 (HLGNG), 285–287 (DMR), and 333–337 (GIGEN) each bind ATP. Residue Glu387 coordinates Mg(2+).

This sequence belongs to the acetokinase family. Homodimer. The cofactor is Mg(2+). Mn(2+) is required as a cofactor.

Its subcellular location is the cytoplasm. It catalyses the reaction acetate + ATP = acetyl phosphate + ADP. The protein operates within metabolic intermediate biosynthesis; acetyl-CoA biosynthesis; acetyl-CoA from acetate: step 1/2. Its function is as follows. Catalyzes the formation of acetyl phosphate from acetate and ATP. Can also catalyze the reverse reaction. The sequence is that of Acetate kinase from Syntrophobacter fumaroxidans (strain DSM 10017 / MPOB).